Consider the following 436-residue polypeptide: Trigger factor (436 aa).

In terms of domain architecture, PPIase FKBP-type spans 161 to 246 (DDQLNIDFVG…VNSVAEPKLP (86 aa)).

It belongs to the FKBP-type PPIase family. Tig subfamily.

It is found in the cytoplasm. It carries out the reaction [protein]-peptidylproline (omega=180) = [protein]-peptidylproline (omega=0). Its function is as follows. Involved in protein export. Acts as a chaperone by maintaining the newly synthesized protein in an open conformation. Functions as a peptidyl-prolyl cis-trans isomerase. This Pseudomonas aeruginosa (strain LESB58) protein is Trigger factor.